A 311-amino-acid chain; its full sequence is Ribosomal RNA small subunit methyltransferase H (311 aa).

Residues G39–H41, D59, F87, D102, and H109 each bind S-adenosyl-L-methionine.

This sequence belongs to the methyltransferase superfamily. RsmH family.

It is found in the cytoplasm. The catalysed reaction is cytidine(1402) in 16S rRNA + S-adenosyl-L-methionine = N(4)-methylcytidine(1402) in 16S rRNA + S-adenosyl-L-homocysteine + H(+). Functionally, specifically methylates the N4 position of cytidine in position 1402 (C1402) of 16S rRNA. The sequence is that of Ribosomal RNA small subunit methyltransferase H from Porphyromonas gingivalis (strain ATCC 33277 / DSM 20709 / CIP 103683 / JCM 12257 / NCTC 11834 / 2561).